We begin with the raw amino-acid sequence, 3084 residues long: Protein prune homolog 2 (3084 aa).

Residue methionine 1 is modified to N-acetylmethionine. The DHH motif motif lies at 109–111 (GSH). Disordered regions lie at residues 394 to 417 (QPSS…QADG), 430 to 465 (TIRS…PGFD), 500 to 536 (ASEQ…PKGL), 672 to 733 (EQES…QKEE), 811 to 837 (KNTW…MGQS), 861 to 907 (EIWG…KATG), 947 to 1080 (SASN…DDPS), 1224 to 1316 (NMPS…GQSE), 1338 to 1395 (SGVN…LEVE), 1502 to 1543 (MNST…DLHD), 1600 to 1652 (GFGK…TTKR), 1776 to 1799 (ETGT…DPDK), 1836 to 1886 (GELE…GDKS), 1961 to 1980 (DENG…QENQ), 2071 to 2196 (ILTH…NPEV), 2410 to 2782 (MLLS…SHPR), 2797 to 2816 (QSEG…EIDI), and 2825 to 2859 (DEAD…AEEE). Residues 501–511 (SEQSQPSSHSA) are compositionally biased toward polar residues. Composition is skewed to basic and acidic residues over residues 682-696 (PWKD…RRTS) and 723-733 (GNKEAQDQKEE). Composition is skewed to polar residues over residues 811 to 828 (KNTW…SGQE) and 865 to 891 (KNNS…NNSK). Residues 962-975 (TNYSTSDSYTSPTY) show a composition bias toward low complexity. The span at 977–999 (GDEKEIANKPVDKDNGFEAKDAE) shows a compositional bias: basic and acidic residues. Residues 1009–1019 (ATSSQQSQRNR) are compositionally biased toward polar residues. Residues 1034-1063 (HTEDKPEGNDAHHPDSDALKTEHAEDKNAS) are compositionally biased toward basic and acidic residues. Over residues 1071 to 1080 (SSPSSYDDPS) the composition is skewed to low complexity. Residues 1248 to 1261 (SPRHSNGKDSHMLE) show a composition bias toward basic and acidic residues. Polar residues predominate over residues 1265 to 1294 (LSESGGLTSQPVNQDTWGDSQGDTASSVTG). Residues 1350–1366 (KPRDQEFSSSDAFEHQD) are compositionally biased toward basic and acidic residues. Low complexity predominate over residues 1368–1378 (SSASGKISSLS). 3 stretches are compositionally biased toward polar residues: residues 1779-1792 (TMDT…STEA), 1854-1869 (PIQN…STNP), and 1965-1980 (CVST…QENQ). The segment covering 2089–2103 (VCHDSEGEQKMEKHT) has biased composition (basic and acidic residues). Residues 2162–2174 (SSKPASSRSSPEP) show a composition bias toward low complexity. Composition is skewed to basic and acidic residues over residues 2416–2428 (PDHR…ETNI), 2506–2525 (KQTE…EDHQ), and 2535–2553 (SHEK…RENI). The span at 2569-2584 (PETQLSGTPDTCQSEF) shows a compositional bias: polar residues. The segment covering 2595–2606 (RMSSSSNHESAS) has biased composition (low complexity). A compositionally biased stretch (polar residues) spans 2607 to 2617 (LENPAQDQSWM). Basic and acidic residues predominate over residues 2653-2664 (KGPKSQVLERNK). Residues 2806–2816 (DNLDSPDEIDI) show a composition bias toward acidic residues. Polar residues predominate over residues 2840–2849 (ANKSSGQESE). The 162-residue stretch at 2879 to 3040 (DMKVIEPYRR…SIIKYDEEKS (162 aa)) folds into the CRAL-TRIO domain.

This sequence belongs to the PPase class C family. Prune subfamily.

The protein localises to the cytoplasm. Functionally, may play an important role in regulating differentiation, survival and aggressiveness of the tumor cells. In Mus musculus (Mouse), this protein is Protein prune homolog 2 (Prune2).